The chain runs to 632 residues: Polygalacturonase non-catalytic subunit AroGP3 (632 aa).

The signal sequence occupies residues 1 to 27 (MHTKILLPSCILLLLLFTLSSLDVVVA). Residues 28 to 109 (KDGDESGNPF…MCALDLLPSL (82 aa)) constitute a propeptide that is removed on maturation. N-linked (GlcNAc...) asparagine glycans are attached at residues Asn-125, Asn-143, Asn-258, Asn-280, Asn-336, Asn-371, and Asn-389. Residues 417–631 (FFREKMLKSG…FENDMTWATA (215 aa)) form the BURP domain.

As to quaternary structure, interacts with polygalacturonase to form heterodimers.

The protein resides in the secreted. The protein localises to the extracellular space. It is found in the apoplast. Its subcellular location is the cell wall. Its function is as follows. Non-catalytic subunit of polygalacturonase. The polypeptide is Polygalacturonase non-catalytic subunit AroGP3 (GP3) (Solanum lycopersicum (Tomato)).